Consider the following 153-residue polypeptide: D-aminoacyl-tRNA deacylase (153 aa).

A Gly-cisPro motif, important for rejection of L-amino acids motif is present at residues 140-141; sequence GP.

The protein belongs to the DTD family. Homodimer.

The protein resides in the cytoplasm. The catalysed reaction is glycyl-tRNA(Ala) + H2O = tRNA(Ala) + glycine + H(+). It catalyses the reaction a D-aminoacyl-tRNA + H2O = a tRNA + a D-alpha-amino acid + H(+). An aminoacyl-tRNA editing enzyme that deacylates mischarged D-aminoacyl-tRNAs. Also deacylates mischarged glycyl-tRNA(Ala), protecting cells against glycine mischarging by AlaRS. Acts via tRNA-based rather than protein-based catalysis; rejects L-amino acids rather than detecting D-amino acids in the active site. By recycling D-aminoacyl-tRNA to D-amino acids and free tRNA molecules, this enzyme counteracts the toxicity associated with the formation of D-aminoacyl-tRNA entities in vivo and helps enforce protein L-homochirality. This chain is D-aminoacyl-tRNA deacylase, found in Trichodesmium erythraeum (strain IMS101).